Here is a 76-residue protein sequence, read N- to C-terminus: Alpha/kappa-conotoxin-like pl14.3 (76 aa).

An N-terminal signal peptide occupies residues 1–27 (MPSVRSVACCCLLWMMLSVQLVTPGSP). Residues 28–39 (ATAQLSGQRTAR) constitute a propeptide that is removed on maturation. 2 disulfide bridges follow: cysteine 46/cysteine 61 and cysteine 50/cysteine 63. The residue at position 64 (aspartate 64) is an Aspartic acid 1-amide. A propeptide spanning residues 65–76 (GKRDVVSSSMAV) is cleaved from the precursor.

Belongs to the conotoxin J superfamily. Expressed by the venom duct.

It localises to the secreted. Functionally, highly inhibits both nicotinic acetylcholine receptors (neuronal (alpha-3/beta-4) and muscular (alpha-1/beta-1/epsilon/delta) subtypes) and the voltage-gated potassium channel Kv1.6/KCNA6 subtype. The polypeptide is Alpha/kappa-conotoxin-like pl14.3 (Conus planorbis (Planorbis cone)).